The primary structure comprises 330 residues: D-lactate dehydrogenase (330 aa).

Residues 155–156 (RI), Asp-175, 206–207 (MP), Asn-212, 233–235 (MAR), and Asp-259 contribute to the NAD(+) site. Arg-235 is a catalytic residue. Glu-264 is a catalytic residue. The active-site Proton donor is His-296.

It belongs to the D-isomer specific 2-hydroxyacid dehydrogenase family.

It catalyses the reaction (R)-lactate + NAD(+) = pyruvate + NADH + H(+). This Streptococcus agalactiae serotype V (strain ATCC BAA-611 / 2603 V/R) protein is D-lactate dehydrogenase (ldhD).